A 117-amino-acid chain; its full sequence is Small ribosomal subunit protein uS17 (117 aa).

A disordered region spans residues 1–42; that stretch reads MMAEAKKAAPKKAATAASKDADAKGPKHTPPNPKVRGRRKTR.

It belongs to the universal ribosomal protein uS17 family. In terms of assembly, part of the 30S ribosomal subunit.

One of the primary rRNA binding proteins, it binds specifically to the 5'-end of 16S ribosomal RNA. The polypeptide is Small ribosomal subunit protein uS17 (Mycolicibacterium paratuberculosis (strain ATCC BAA-968 / K-10) (Mycobacterium paratuberculosis)).